A 606-amino-acid polypeptide reads, in one-letter code: Glutamine--fructose-6-phosphate aminotransferase [isomerizing] (606 aa).

Cys2 acts as the Nucleophile; for GATase activity in catalysis. Residues 2–218 enclose the Glutamine amidotransferase type-2 domain; it reads CGIFGYLGQR…SGELAVLRIG (217 aa). SIS domains are found at residues 278–424 and 455–596; these read FAES…QRQE and WRCR…VDRP. Lys601 acts as the For Fru-6P isomerization activity in catalysis.

Homodimer.

It localises to the cytoplasm. The catalysed reaction is D-fructose 6-phosphate + L-glutamine = D-glucosamine 6-phosphate + L-glutamate. In terms of biological role, catalyzes the first step in hexosamine metabolism, converting fructose-6P into glucosamine-6P using glutamine as a nitrogen source. This is Glutamine--fructose-6-phosphate aminotransferase [isomerizing] from Chlamydia muridarum (strain MoPn / Nigg).